Here is a 331-residue protein sequence, read N- to C-terminus: PTS-dependent dihydroxyacetone kinase 2, dihydroxyacetone-binding subunit DhaK (331 aa).

Residues 7 to 328 (DGYEAVEEML…LDTPCDTPYF (322 aa)) enclose the DhaK domain. Dihydroxyacetone is bound by residues 55 to 58 (GSGH) and D111. H58 (proton acceptor) is an active-site residue. The active-site Tele-hemiaminal-histidine intermediate is H218.

As to quaternary structure, homodimer. The dihydroxyacetone kinase complex is composed of a homodimer of DhaM, a homodimer of DhaK and the subunit DhaL.

It localises to the cytoplasm. It carries out the reaction dihydroxyacetone + phosphoenolpyruvate = dihydroxyacetone phosphate + pyruvate. It participates in polyol metabolism; glycerol degradation. Its function is as follows. Dihydroxyacetone binding subunit of the dihydroxyacetone kinase, which is responsible for the phosphoenolpyruvate (PEP)-dependent phosphorylation of dihydroxyacetone via a phosphoryl group transfer from DhaL-ATP. The polypeptide is PTS-dependent dihydroxyacetone kinase 2, dihydroxyacetone-binding subunit DhaK (Listeria innocua serovar 6a (strain ATCC BAA-680 / CLIP 11262)).